The chain runs to 434 residues: Serine hydroxymethyltransferase (434 aa).

(6S)-5,6,7,8-tetrahydrofolate contacts are provided by residues Leu-133 and Gly-137–Leu-139. N6-(pyridoxal phosphate)lysine is present on Lys-242.

The protein belongs to the SHMT family. In terms of assembly, homodimer. The cofactor is pyridoxal 5'-phosphate.

The protein resides in the cytoplasm. The catalysed reaction is (6R)-5,10-methylene-5,6,7,8-tetrahydrofolate + glycine + H2O = (6S)-5,6,7,8-tetrahydrofolate + L-serine. The protein operates within one-carbon metabolism; tetrahydrofolate interconversion. Its pathway is amino-acid biosynthesis; glycine biosynthesis; glycine from L-serine: step 1/1. Its function is as follows. Catalyzes the reversible interconversion of serine and glycine with tetrahydrofolate (THF) serving as the one-carbon carrier. This reaction serves as the major source of one-carbon groups required for the biosynthesis of purines, thymidylate, methionine, and other important biomolecules. Also exhibits THF-independent aldolase activity toward beta-hydroxyamino acids, producing glycine and aldehydes, via a retro-aldol mechanism. The chain is Serine hydroxymethyltransferase from Hyphomicrobium methylovorum.